The following is a 478-amino-acid chain: Ankyrin repeat and BTB/POZ domain-containing protein 1 (478 aa).

2 ANK repeats span residues 1–31 (MDTS…EVNV) and 35–64 (WDST…RCEA). BTB domains lie at 115 to 182 (SDVV…DIGV) and 272 to 346 (PDIC…ELSP). Residues 451 to 477 (VQTYSAIEEAQQRLRALEDLLVSIGLD) are a coiled coil.

Ubiquitously expressed in all fetal tissues examined including heart, brain, liver, and kidney. Also expressed at lower levels in both adult heart and hypertrophic heart.

Its subcellular location is the cytoplasm. Functionally, may act as a mediator of the PTEN growth-suppressive signaling pathway. May play a role in developmental processes. This is Ankyrin repeat and BTB/POZ domain-containing protein 1 from Homo sapiens (Human).